The primary structure comprises 288 residues: 4-diphosphocytidyl-2-C-methyl-D-erythritol kinase (288 aa).

Lys10 is an active-site residue. An ATP-binding site is contributed by 99-109 (PMGGGLGGGSS). The active site involves Asp141.

This sequence belongs to the GHMP kinase family. IspE subfamily. As to quaternary structure, homodimer.

The enzyme catalyses 4-CDP-2-C-methyl-D-erythritol + ATP = 4-CDP-2-C-methyl-D-erythritol 2-phosphate + ADP + H(+). The protein operates within isoprenoid biosynthesis; isopentenyl diphosphate biosynthesis via DXP pathway; isopentenyl diphosphate from 1-deoxy-D-xylulose 5-phosphate: step 3/6. Its function is as follows. Catalyzes the phosphorylation of the position 2 hydroxy group of 4-diphosphocytidyl-2C-methyl-D-erythritol. The chain is 4-diphosphocytidyl-2-C-methyl-D-erythritol kinase from Serratia proteamaculans (strain 568).